Reading from the N-terminus, the 217-residue chain is Cysteine-rich protein 3 (217 aa).

The LIM zinc-binding 1 domain maps to 3 to 64 (WTCPRCQQPV…KPCYGALFGP (62 aa)). The interval 84–112 (PGCTTPLSPSSFSPPRPRTGLPQGKKSPP) is disordered. The 62-residue stretch at 122–183 (SLCPGCGEPV…VPCYGYLFGP (62 aa)) folds into the LIM zinc-binding 2 domain.

In terms of tissue distribution, expressed in most tissues, but not in skeletal muscle.

It localises to the cytoplasm. The polypeptide is Cysteine-rich protein 3 (CRIP3) (Homo sapiens (Human)).